A 59-amino-acid chain; its full sequence is Large ribosomal subunit protein bL32 (59 aa).

This sequence belongs to the bacterial ribosomal protein bL32 family.

In Rhizorhabdus wittichii (strain DSM 6014 / CCUG 31198 / JCM 15750 / NBRC 105917 / EY 4224 / RW1) (Sphingomonas wittichii), this protein is Large ribosomal subunit protein bL32.